Reading from the N-terminus, the 302-residue chain is tRNA pseudouridine synthase B (302 aa).

His40 serves as a coordination point for substrate. Asp45 acts as the Nucleophile in catalysis. Substrate-binding residues include Tyr73, Tyr178, and Leu199.

The protein belongs to the pseudouridine synthase TruB family. Type 1 subfamily.

The catalysed reaction is uridine(55) in tRNA = pseudouridine(55) in tRNA. Responsible for synthesis of pseudouridine from uracil-55 in the psi GC loop of transfer RNAs. The chain is tRNA pseudouridine synthase B from Buchnera aphidicola subsp. Baizongia pistaciae (strain Bp).